The chain runs to 544 residues: Chaperonin GroEL (544 aa).

Residues 29–32, 86–90, G413, 476–478, and D492 each bind ATP; these read TLGP, DGTTT, and NAA.

The protein belongs to the chaperonin (HSP60) family. As to quaternary structure, forms a cylinder of 14 subunits composed of two heptameric rings stacked back-to-back. Interacts with the co-chaperonin GroES.

Its subcellular location is the cytoplasm. It catalyses the reaction ATP + H2O + a folded polypeptide = ADP + phosphate + an unfolded polypeptide.. Its function is as follows. Together with its co-chaperonin GroES, plays an essential role in assisting protein folding. The GroEL-GroES system forms a nano-cage that allows encapsulation of the non-native substrate proteins and provides a physical environment optimized to promote and accelerate protein folding. In Bacillus mycoides (strain KBAB4) (Bacillus weihenstephanensis), this protein is Chaperonin GroEL.